The following is a 673-amino-acid chain: DNA ligase (673 aa).

NAD(+) contacts are provided by residues 33-37 (DHQYD), 83-84 (SL), and Glu117. The active-site N6-AMP-lysine intermediate is the Lys119. Residues Arg140, Glu175, Lys282, and Lys306 each coordinate NAD(+). Zn(2+) contacts are provided by Cys400, Cys403, Cys418, and Cys424. The BRCT domain maps to 592 to 673 (RGSSAISGKT…WVKMVEDARS (82 aa)).

The protein belongs to the NAD-dependent DNA ligase family. LigA subfamily. Mg(2+) serves as cofactor. It depends on Mn(2+) as a cofactor.

It carries out the reaction NAD(+) + (deoxyribonucleotide)n-3'-hydroxyl + 5'-phospho-(deoxyribonucleotide)m = (deoxyribonucleotide)n+m + AMP + beta-nicotinamide D-nucleotide.. In terms of biological role, DNA ligase that catalyzes the formation of phosphodiester linkages between 5'-phosphoryl and 3'-hydroxyl groups in double-stranded DNA using NAD as a coenzyme and as the energy source for the reaction. It is essential for DNA replication and repair of damaged DNA. The polypeptide is DNA ligase (Anaplasma marginale (strain St. Maries)).